We begin with the raw amino-acid sequence, 413 residues long: Glucose-1-phosphate adenylyltransferase (413 aa).

Residues Gly-169, 184–185 (EK), and Ser-201 each bind alpha-D-glucose 1-phosphate.

It belongs to the bacterial/plant glucose-1-phosphate adenylyltransferase family. As to quaternary structure, homotetramer.

The enzyme catalyses alpha-D-glucose 1-phosphate + ATP + H(+) = ADP-alpha-D-glucose + diphosphate. It participates in glycan biosynthesis; glycogen biosynthesis. In terms of biological role, involved in the biosynthesis of ADP-glucose, a building block required for the elongation reactions to produce glycogen. Catalyzes the reaction between ATP and alpha-D-glucose 1-phosphate (G1P) to produce pyrophosphate and ADP-Glc. This chain is Glucose-1-phosphate adenylyltransferase, found in Trichlorobacter lovleyi (strain ATCC BAA-1151 / DSM 17278 / SZ) (Geobacter lovleyi).